The chain runs to 309 residues: Coenzyme PQQ synthesis protein B (309 aa).

The protein belongs to the PqqB family.

Its pathway is cofactor biosynthesis; pyrroloquinoline quinone biosynthesis. Functionally, may be involved in the transport of PQQ or its precursor to the periplasm. The polypeptide is Coenzyme PQQ synthesis protein B (Bradyrhizobium diazoefficiens (strain JCM 10833 / BCRC 13528 / IAM 13628 / NBRC 14792 / USDA 110)).